The primary structure comprises 731 residues: 1,4-alpha-glucan branching enzyme GlgB (731 aa).

Catalysis depends on Asp-409, which acts as the Nucleophile. Catalysis depends on Glu-462, which acts as the Proton donor.

It belongs to the glycosyl hydrolase 13 family. GlgB subfamily. Monomer.

It catalyses the reaction Transfers a segment of a (1-&gt;4)-alpha-D-glucan chain to a primary hydroxy group in a similar glucan chain.. The protein operates within glycan biosynthesis; glycogen biosynthesis. Catalyzes the formation of the alpha-1,6-glucosidic linkages in glycogen by scission of a 1,4-alpha-linked oligosaccharide from growing alpha-1,4-glucan chains and the subsequent attachment of the oligosaccharide to the alpha-1,6 position. The polypeptide is 1,4-alpha-glucan branching enzyme GlgB (Roseobacter denitrificans (strain ATCC 33942 / OCh 114) (Erythrobacter sp. (strain OCh 114))).